A 378-amino-acid chain; its full sequence is Dual-specificity RNA methyltransferase RlmN (378 aa).

Glu95 (proton acceptor) is an active-site residue. Residues 101 to 345 (EETRGTLCVS…TTIRKTRGDD (245 aa)) enclose the Radical SAM core domain. Cysteines 108 and 350 form a disulfide. [4Fe-4S] cluster-binding residues include Cys115, Cys119, and Cys122. Residues 176 to 177 (GE), Ser208, 230 to 232 (SLH), and Asn307 contribute to the S-adenosyl-L-methionine site. Cys350 functions as the S-methylcysteine intermediate in the catalytic mechanism.

Belongs to the radical SAM superfamily. RlmN family. [4Fe-4S] cluster is required as a cofactor.

The protein resides in the cytoplasm. The catalysed reaction is adenosine(2503) in 23S rRNA + 2 reduced [2Fe-2S]-[ferredoxin] + 2 S-adenosyl-L-methionine = 2-methyladenosine(2503) in 23S rRNA + 5'-deoxyadenosine + L-methionine + 2 oxidized [2Fe-2S]-[ferredoxin] + S-adenosyl-L-homocysteine. It catalyses the reaction adenosine(37) in tRNA + 2 reduced [2Fe-2S]-[ferredoxin] + 2 S-adenosyl-L-methionine = 2-methyladenosine(37) in tRNA + 5'-deoxyadenosine + L-methionine + 2 oxidized [2Fe-2S]-[ferredoxin] + S-adenosyl-L-homocysteine. Functionally, specifically methylates position 2 of adenine 2503 in 23S rRNA and position 2 of adenine 37 in tRNAs. m2A2503 modification seems to play a crucial role in the proofreading step occurring at the peptidyl transferase center and thus would serve to optimize ribosomal fidelity. This Burkholderia thailandensis (strain ATCC 700388 / DSM 13276 / CCUG 48851 / CIP 106301 / E264) protein is Dual-specificity RNA methyltransferase RlmN.